A 524-amino-acid chain; its full sequence is Cytochrome P450 4F11 (524 aa).

Residues 15–37 form a helical membrane-spanning segment; the sequence is AASPWLLLLLVGGSWLLARVLAW. 2 positions are modified to 4-hydroxynonenal-conjugated cysteine: cysteine 45 and cysteine 260. Residue histidine 261 is modified to 4-hydroxynonenal-conjugated histidine. Glutamate 328 serves as a coordination point for heme. Position 347 is a 4-hydroxynonenal-conjugated histidine (histidine 347). Cysteine 354 is modified (4-hydroxynonenal-conjugated cysteine). Lysine 451 carries the 4-hydroxynonenal-conjugated lysine modification. Cysteine 468 contributes to the heme binding site.

Belongs to the cytochrome P450 family. Requires heme as cofactor. In terms of processing, 4-hydroxynonenal conjugation impairs substrate binding and the long-chain fatty acid omega-monooxygenase activity. In terms of tissue distribution, expressed mainly in human liver, followed by kidney, heart, and skeletal muscle.

The protein resides in the endoplasmic reticulum membrane. It is found in the microsome membrane. It carries out the reaction an organic molecule + reduced [NADPH--hemoprotein reductase] + O2 = an alcohol + oxidized [NADPH--hemoprotein reductase] + H2O + H(+). The enzyme catalyses an omega-methyl-long-chain fatty acid + reduced [NADPH--hemoprotein reductase] + O2 = an omega-hydroxy-long-chain fatty acid + oxidized [NADPH--hemoprotein reductase] + H2O + H(+). The catalysed reaction is dodecanoate + reduced [NADPH--hemoprotein reductase] + O2 = 12-hydroxydodecanoate + oxidized [NADPH--hemoprotein reductase] + H2O + H(+). It catalyses the reaction hexadecanoate + reduced [NADPH--hemoprotein reductase] + O2 = 16-hydroxyhexadecanoate + oxidized [NADPH--hemoprotein reductase] + H2O + H(+). It carries out the reaction (9Z)-octadecenoate + reduced [NADPH--hemoprotein reductase] + O2 = 18-hydroxy-(9Z)-octadecenoate + oxidized [NADPH--hemoprotein reductase] + H2O + H(+). The enzyme catalyses (5Z,8Z,11Z,14Z)-eicosatetraenoate + reduced [NADPH--hemoprotein reductase] + O2 = 20-hydroxy-(5Z,8Z,11Z,14Z)-eicosatetraenoate + oxidized [NADPH--hemoprotein reductase] + H2O + H(+). The catalysed reaction is (4Z,7Z,10Z,13Z,16Z,19Z)-docosahexaenoate + reduced [NADPH--hemoprotein reductase] + O2 = 22-hydroxy-(4Z,7Z,10Z,13Z,16Z,19Z)-docosahexaenoate + oxidized [NADPH--hemoprotein reductase] + H2O + H(+). It catalyses the reaction 8-hydroxy-(5Z,9E,11Z,14Z)-eicosatetraenoate + reduced [NADPH--hemoprotein reductase] + O2 = 8,20-dihydroxy-(5Z,9E,11Z,14Z)-eicosatetraenoate + oxidized [NADPH--hemoprotein reductase] + H2O + H(+). It carries out the reaction 3-hydroxyhexadecanoate + reduced [NADPH--hemoprotein reductase] + O2 = 3,16-dihydroxyhexadecanoate + oxidized [NADPH--hemoprotein reductase] + H2O + H(+). The enzyme catalyses 3-hydroxyoctadecanoate + reduced [NADPH--hemoprotein reductase] + O2 = 3,18-dihydroxyoctadecanoate + oxidized [NADPH--hemoprotein reductase] + H2O + H(+). The catalysed reaction is phylloquinone + reduced [NADPH--hemoprotein reductase] + O2 = omega-hydroxyphylloquinone + oxidized [NADPH--hemoprotein reductase] + H2O + H(+). It catalyses the reaction menaquinone-4 + reduced [NADPH--hemoprotein reductase] + O2 = omega-hydroxymenaquinone-4 + oxidized [NADPH--hemoprotein reductase] + H2O + H(+). It carries out the reaction 2-hexyl-5-pentylresorcinol + reduced [NADPH--hemoprotein reductase] + O2 = 2-hexyl-5-(5-hydroxypentyl)resorcinol + oxidized [NADPH--hemoprotein reductase] + H2O + H(+). The enzyme catalyses 2-hexyl-5-heptylresorcinol + reduced [NADPH--hemoprotein reductase] + O2 = 2-hexyl-5-(7-hydroxyheptyl)resorcinol + oxidized [NADPH--hemoprotein reductase] + H2O + H(+). The catalysed reaction is 12-hydroxy-(5Z,8Z,10E,14Z)-eicosatetraenoate + reduced [NADPH--hemoprotein reductase] + O2 = 12,20-dihydroxy-(5Z,8Z,10E,14Z)-eicosatetraenoate + oxidized [NADPH--hemoprotein reductase] + H2O + H(+). It catalyses the reaction 15-hydroxy-(5Z,8Z,11Z,13E)-eicosatetraenoate + reduced [NADPH--hemoprotein reductase] + O2 = 15,20-dihydroxy-(5Z,8Z,11Z,13E)-eicosatetraenoate + oxidized [NADPH--hemoprotein reductase] + H2O + H(+). It functions in the pathway lipid metabolism; arachidonate metabolism. Its pathway is lipid metabolism; oxylipin biosynthesis. The protein operates within cofactor degradation; phylloquinone degradation. It participates in xenobiotic degradation. Its activity is regulated as follows. Inhibition of the long-chain fatty acid omega-monooxygenase activity by 4-hydroxynonenal (4-HNE) conjugation. Its function is as follows. A cytochrome P450 monooxygenase involved in the metabolism of various endogenous substrates, including fatty acids and their oxygenated derivatives (oxylipins). Mechanistically, uses molecular oxygen inserting one oxygen atom into a substrate, and reducing the second into a water molecule, with two electrons provided by NADPH via cytochrome P450 reductase (CPR; NADPH-ferrihemoprotein reductase). Catalyzes with high efficiency the oxidation of the terminal carbon (omega-oxidation) of 3-hydroxy fatty acids, such as 3-hydroxyhexadecanoic and 3-hydroxyoctadecanoic acids, likely participating in the biosynthesis of long-chain 3-hydroxydicarboxylic acids. Omega-hydroxylates and inactivates phylloquinone (vitamin K1), and menaquinone-4 (MK-4, a form of vitamin K2), both acting as cofactors in blood coagulation. Metabolizes with low efficiciency fatty acids, including (5Z,8Z,11Z,14Z)-eicosatetraenoic acid (arachidonate) and its oxygenated metabolite 8-hydroxyeicosatetraenoic acid (8-HETE). Catalyzes N- and O-demethylation of drugs such as erythromycin, benzphetamine, ethylmorphine, chlorpromazine, imipramine and verapamil. Catalyzes the oxidation of dialkylresorcinol 2. The sequence is that of Cytochrome P450 4F11 from Homo sapiens (Human).